The sequence spans 180 residues: Adenine phosphoribosyltransferase (180 aa).

The protein belongs to the purine/pyrimidine phosphoribosyltransferase family. Homodimer.

It localises to the cytoplasm. It carries out the reaction AMP + diphosphate = 5-phospho-alpha-D-ribose 1-diphosphate + adenine. The protein operates within purine metabolism; AMP biosynthesis via salvage pathway; AMP from adenine: step 1/1. Functionally, catalyzes a salvage reaction resulting in the formation of AMP, that is energically less costly than de novo synthesis. The polypeptide is Adenine phosphoribosyltransferase (Agrobacterium fabrum (strain C58 / ATCC 33970) (Agrobacterium tumefaciens (strain C58))).